The primary structure comprises 662 residues: Protein Aster-C (662 aa).

The segment at 1-34 (MEGAPTVRQVMNEGDSSLATELQEDVEENPSPTV) is disordered. Residues 69–136 (EEYRRQFTHL…KNITFMTKEK (68 aa)) enclose the GRAM domain. Disordered regions lie at residues 212-237 (SIEDVRPRSPGRSSLDDSGERDEKLS) and 250-284 (VSETESFDGNSSKGGLGKEESQNEKQTKKSLLPTL). Residues 265 to 276 (LGKEESQNEKQT) show a composition bias toward basic and acidic residues. A VASt domain is found at 326 to 497 (HGRLFINRIF…DLLIEESILN (172 aa)). Residues 557 to 577 (LIVVMSIFVLLLVLLNVTLFL) traverse the membrane as a helical segment.

The protein resides in the endoplasmic reticulum membrane. It is found in the cell membrane. Its function is as follows. Cholesterol transporter that mediates non-vesicular transport of cholesterol from the plasma membrane (PM) to the endoplasmic reticulum (ER). Contains unique domains for binding cholesterol and the PM, thereby serving as a molecular bridge for the transfer of cholesterol from the PM to the ER. Plays a crucial role in cholesterol homeostasis and has the unique ability to localize to the PM based on the level of membrane cholesterol. In lipid-poor conditions localizes to the ER membrane and in response to excess cholesterol in the PM is recruited to the endoplasmic reticulum-plasma membrane contact sites (EPCS) which is mediated by the GRAM domain. At the EPCS, the sterol-binding VASt/ASTER domain binds to the cholesterol in the PM and facilitates its transfer from the PM to ER. In Pongo abelii (Sumatran orangutan), this protein is Protein Aster-C (GRAMD1C).